The sequence spans 305 residues: tRNA-cytidine(32) 2-sulfurtransferase (305 aa).

The interval 1–20 is disordered; that stretch reads MTAVLPLPQPLADPAPRDPR. The PP-loop motif signature appears at 59-64; the sequence is SGGKDS. [4Fe-4S] cluster is bound by residues cysteine 134, cysteine 137, and cysteine 225. The segment at 282–305 is disordered; it reads DAPSGLDPDPRAWLSAGHATHDSD.

The protein belongs to the TtcA family. In terms of assembly, homodimer. Requires Mg(2+) as cofactor. [4Fe-4S] cluster serves as cofactor.

The protein resides in the cytoplasm. It carries out the reaction cytidine(32) in tRNA + S-sulfanyl-L-cysteinyl-[cysteine desulfurase] + AH2 + ATP = 2-thiocytidine(32) in tRNA + L-cysteinyl-[cysteine desulfurase] + A + AMP + diphosphate + H(+). It functions in the pathway tRNA modification. Functionally, catalyzes the ATP-dependent 2-thiolation of cytidine in position 32 of tRNA, to form 2-thiocytidine (s(2)C32). The sulfur atoms are provided by the cysteine/cysteine desulfurase (IscS) system. This is tRNA-cytidine(32) 2-sulfurtransferase from Xanthomonas axonopodis pv. citri (strain 306).